We begin with the raw amino-acid sequence, 25 residues long: Chlorocatechol 1,2-dioxygenase 1 (25 aa).

It belongs to the intradiol ring-cleavage dioxygenase family. Fe(3+) is required as a cofactor.

It catalyses the reaction 3,5-dichlorocatechol + O2 = (2E,4E)-2,4-dichloromuconate + 2 H(+). The protein operates within xenobiotic degradation; 2-(2,4-dichlorophenoxy)propanoate degradation. The polypeptide is Chlorocatechol 1,2-dioxygenase 1 (tfdC) (Delftia acidovorans (Pseudomonas acidovorans)).